An 883-amino-acid polypeptide reads, in one-letter code: Phosphoenolpyruvate carboxylase (883 aa).

Catalysis depends on residues H138 and K546.

This sequence belongs to the PEPCase type 1 family. Mg(2+) is required as a cofactor.

The enzyme catalyses oxaloacetate + phosphate = phosphoenolpyruvate + hydrogencarbonate. Its function is as follows. Forms oxaloacetate, a four-carbon dicarboxylic acid source for the tricarboxylic acid cycle. The chain is Phosphoenolpyruvate carboxylase from Escherichia coli O7:K1 (strain IAI39 / ExPEC).